Consider the following 467-residue polypeptide: ATP synthase subunit beta (467 aa).

Position 150–157 (150–157 (GGAGVGKT)) interacts with ATP.

It belongs to the ATPase alpha/beta chains family. As to quaternary structure, F-type ATPases have 2 components, CF(1) - the catalytic core - and CF(0) - the membrane proton channel. CF(1) has five subunits: alpha(3), beta(3), gamma(1), delta(1), epsilon(1). CF(0) has three main subunits: a(1), b(2) and c(9-12). The alpha and beta chains form an alternating ring which encloses part of the gamma chain. CF(1) is attached to CF(0) by a central stalk formed by the gamma and epsilon chains, while a peripheral stalk is formed by the delta and b chains.

The protein localises to the cell inner membrane. The enzyme catalyses ATP + H2O + 4 H(+)(in) = ADP + phosphate + 5 H(+)(out). Its function is as follows. Produces ATP from ADP in the presence of a proton gradient across the membrane. The catalytic sites are hosted primarily by the beta subunits. This chain is ATP synthase subunit beta, found in Vibrio alginolyticus.